The primary structure comprises 294 residues: MRLAVICFCLFGIASSLPVKVTDSGSSEEKLYSLHPDPIATWLVPDPSQKQNLLAPQNAVSSEEKDDFKQETLPSNSNESHDHMDDDDDDDDDDGDHAESEDSVDSDESDESHHSDESDETVTASTQADTFTPIVPTVDVPNGRGDSLAYGLRSKSRSFQVSDEQYPDATDEDLTSHMKSGESKESLDVIPVAQLLSMPSDQDNNGKGSHESSQLDEPSLETHRLEHSKESQESADQSDVIDSQASSKASLEHQSHKFHSHKDKLVLDPKSKEDDRYLKFRISHELESSSSEVN.

The first 16 residues, 1-16, serve as a signal peptide directing secretion; that stretch reads MRLAVICFCLFGIASS. Serine 24, serine 26, serine 27, serine 61, serine 62, serine 75, serine 77, serine 80, serine 106, serine 109, serine 112, serine 115, and serine 118 each carry phosphoserine. Positions 42–274 are disordered; it reads WLVPDPSQKQ…LVLDPKSKED (233 aa). Residues 48–61 show a composition bias toward polar residues; the sequence is SQKQNLLAPQNAVS. Residues 85-110 are compositionally biased toward acidic residues; that stretch reads DDDDDDDDDDGDHAESEDSVDSDESD. Positions 121-130 are enriched in polar residues; sequence TVTASTQADT. O-linked (GalNAc...) threonine glycans are attached at residues threonine 123, threonine 132, and threonine 137. Residues 144 to 146 carry the Cell attachment site motif; it reads RGD. 2 positions are modified to phosphothreonine: threonine 170 and threonine 175. Basic and acidic residues predominate over residues 174-187; sequence LTSHMKSGESKESL. A phosphoserine mark is found at serine 176, serine 180, serine 200, serine 209, serine 213, and serine 219. Positions 197-216 are enriched in polar residues; it reads SMPSDQDNNGKGSHESSQLD. Serine 219 carries O-linked (Xyl...) (chondroitin sulfate) serine glycosylation. A compositionally biased stretch (basic and acidic residues) spans 220–232; that stretch reads LETHRLEHSKESQ. Threonine 222 is modified (phosphothreonine). Phosphoserine occurs at positions 228, 231, 234, 238, 243, 247, 250, 255, 260, 271, 283, 288, 290, and 291. Positions 234–249 are enriched in polar residues; that stretch reads SADQSDVIDSQASSKA. Positions 263–274 are enriched in basic and acidic residues; the sequence is DKLVLDPKSKED. The O-linked (Xyl...) (chondroitin sulfate) serine glycan is linked to serine 288.

Belongs to the osteopontin family. As to quaternary structure, interacts (via N-terminus) with integrin ITGA9:ITGB1. Post-translationally, extensively phosphorylated by FAM20C in the extracellular medium at multiple sites within the S-x-E/pS motif. The phosphorylated form inhibits hydroxyapatite crystallization. Dephosphorylation via a mechanism involving ALPL/TNAP promotes hydroxyapatite crystallization. In terms of processing, O-glycosylated. Forms covalent cross-links mediated by transglutaminase TGM2, between a glutamine and the epsilon-amino group of a lysine residue, forming homopolymers and heteropolymers, increasing its collagen binding properties.

It is found in the secreted. Functionally, major non-collagenous bone protein that binds tightly to hydroxyapatite. Appears to form an integral part of the mineralized matrix. Probably important to cell-matrix interaction. Acts as a cytokine involved in enhancing production of interferon-gamma and interleukin-12 and reducing production of interleukin-10 and is essential in the pathway that leads to type I immunity. The polypeptide is Osteopontin (Spp1) (Mus musculus (Mouse)).